Here is a 248-residue protein sequence, read N- to C-terminus: Isoprenyl transferase (248 aa).

The active site involves Asp28. Asp28 serves as a coordination point for Mg(2+). Substrate-binding positions include 29-32, Trp33, Arg41, His45, and 73-75; these read GNGR and SSE. Asn76 serves as the catalytic Proton acceptor. Substrate contacts are provided by residues Trp77, Arg79, Arg196, and 202 to 204; that span reads RLS. Glu215 lines the Mg(2+) pocket.

It belongs to the UPP synthase family. As to quaternary structure, homodimer. Mg(2+) is required as a cofactor.

Its function is as follows. Catalyzes the condensation of isopentenyl diphosphate (IPP) with allylic pyrophosphates generating different type of terpenoids. The chain is Isoprenyl transferase from Zymomonas mobilis subsp. mobilis (strain ATCC 31821 / ZM4 / CP4).